The sequence spans 340 residues: Glyceraldehyde-3-phosphate dehydrogenase (340 aa).

NAD(+) is bound by residues 11–12 and glycine 109; that span reads TI. 138-140 serves as a coordination point for D-glyceraldehyde 3-phosphate; it reads SCN. Catalysis depends on cysteine 139, which acts as the Nucleophile. Residue arginine 167 participates in NAD(+) binding. Residue 193-194 participates in D-glyceraldehyde 3-phosphate binding; that stretch reads HA. Residue glutamine 300 coordinates NAD(+).

The protein belongs to the glyceraldehyde-3-phosphate dehydrogenase family. As to quaternary structure, homotetramer.

Its subcellular location is the cytoplasm. It catalyses the reaction D-glyceraldehyde 3-phosphate + phosphate + NADP(+) = (2R)-3-phospho-glyceroyl phosphate + NADPH + H(+). The enzyme catalyses D-glyceraldehyde 3-phosphate + phosphate + NAD(+) = (2R)-3-phospho-glyceroyl phosphate + NADH + H(+). It functions in the pathway carbohydrate degradation; glycolysis; pyruvate from D-glyceraldehyde 3-phosphate: step 1/5. The polypeptide is Glyceraldehyde-3-phosphate dehydrogenase (Saccharolobus islandicus (strain L.S.2.15 / Lassen #1) (Sulfolobus islandicus)).